Here is a 185-residue protein sequence, read N- to C-terminus: Ribosome-recycling factor (185 aa).

It belongs to the RRF family.

Its subcellular location is the cytoplasm. In terms of biological role, responsible for the release of ribosomes from messenger RNA at the termination of protein biosynthesis. May increase the efficiency of translation by recycling ribosomes from one round of translation to another. This Desulfatibacillum aliphaticivorans protein is Ribosome-recycling factor.